A 260-amino-acid polypeptide reads, in one-letter code: Aspartate/glutamate leucyltransferase (260 aa).

Positions 241–251 are enriched in basic and acidic residues; that stretch reads DRLPEEGDRGP. A disordered region spans residues 241-260; it reads DRLPEEGDRGPARFPASLTE.

It belongs to the R-transferase family. Bpt subfamily.

Its subcellular location is the cytoplasm. The enzyme catalyses N-terminal L-glutamyl-[protein] + L-leucyl-tRNA(Leu) = N-terminal L-leucyl-L-glutamyl-[protein] + tRNA(Leu) + H(+). The catalysed reaction is N-terminal L-aspartyl-[protein] + L-leucyl-tRNA(Leu) = N-terminal L-leucyl-L-aspartyl-[protein] + tRNA(Leu) + H(+). Functions in the N-end rule pathway of protein degradation where it conjugates Leu from its aminoacyl-tRNA to the N-termini of proteins containing an N-terminal aspartate or glutamate. This chain is Aspartate/glutamate leucyltransferase, found in Gluconacetobacter diazotrophicus (strain ATCC 49037 / DSM 5601 / CCUG 37298 / CIP 103539 / LMG 7603 / PAl5).